The primary structure comprises 519 residues: UPF0053 protein bbp_300 (519 aa).

The next 7 membrane-spanning stretches (helical) occupy residues 13 to 35, 48 to 70, 80 to 102, 123 to 145, 150 to 172, 185 to 207, and 212 to 231; these read LLTL…AILS, LIGL…WMVT, YFSF…FKAT, AGFW…DAII, TINN…LIAS, VVVL…ALGF, and GYLY…NQIA. CBS domains follow at residues 311 to 373 and 374 to 434; these read MTPR…IIDF and SSTT…DADE.

Belongs to the UPF0053 family.

The protein localises to the cell membrane. This chain is UPF0053 protein bbp_300, found in Buchnera aphidicola subsp. Baizongia pistaciae (strain Bp).